The following is a 469-amino-acid chain: MSIHFSSPVFTSRSAAFSGRGAQVRLSSARPGGLGSSSLYGLGASRPRVAVRSAYGGPVGAGIREVTINQSLLAPLRLDADPSLQRVRQEEREQIKTLNNKFASFIDKVRFLEQQNKLLETKWTLLQEQKSAKSSRLPDIFEAQIAGLRGQLEALQVDGGRLEAELQSMQDVVEDFKNKYEDEINRRAAAENEFVVLKKDVDAAYMSKVELEAKVDALNDEINFLRTLNETELTELQSQISDTSVVLSMDNSRSLDLDGIIAEVKAQYEEMAKCSRAEAEAWYQTKFETLQAQAGKHGDDLRNTRNEISEMNRAIQRLQAEIDNIKDQRAKLEAAIAEAEERGELALKDARAKQEELEAALQRAKQDMARQLREYQELMSVKLALDIEIATYRKLLEGEESRLAGDGVGAVNISVMNSTGGSSSGGGIGLTLGGTMGSNALSFSSSAGPGPLKAYSIRTASASRRSARN.

The residue at position 2 (Ser2) is an N-acetylserine. Residues Ser2, Ser6, and Ser7 each carry the phosphoserine modification. Residues 2-90 (SIHFSSPVFT…DPSLQRVRQE (89 aa)) form a head region. O-linked (GlcNAc) serine glycosylation occurs at Ser12. The residue at position 20 (Arg20) is a Dimethylated arginine; alternate. Arg20 carries the post-translational modification Omega-N-methylarginine; alternate. A phosphoserine mark is found at Ser53, Ser71, and Ser83. The tract at residues 90 to 126 (EEREQIKTLNNKFASFIDKVRFLEQQNKLLETKWTLL) is coil 1A. In terms of domain architecture, IF rod spans 91–403 (EREQIKTLNN…KLLEGEESRL (313 aa)). Residue Thr97 is modified to Phosphothreonine. Residues 127–144 (QEQKSAKSSRLPDIFEAQ) form a linker 1 region. A Glycyl lysine isopeptide (Lys-Gly) (interchain with G-Cter in SUMO2) cross-link involves residue Lys130. The coil 1B stretch occupies residues 145 to 236 (IAGLRGQLEA…TLNETELTEL (92 aa)). Lys179 carries the post-translational modification N6-acetyllysine. The tract at residues 237–260 (QSQISDTSVVLSMDNSRSLDLDGI) is linker 12. A phosphoserine mark is found at Ser252 and Ser254. The tract at residues 261–399 (IAEVKAQYEE…ATYRKLLEGE (139 aa)) is coil 2. Residues Lys265 and Lys286 each participate in a glycyl lysine isopeptide (Lys-Gly) (interchain with G-Cter in SUMO2) cross-link. A Phosphothreonine modification is found at Thr289. Residues Lys296 and Lys331 each participate in a glycyl lysine isopeptide (Lys-Gly) (interchain with G-Cter in SUMO2) cross-link. Residues 400 to 469 (ESRLAGDGVG…ASASRRSARN (70 aa)) form a tail region.

The protein belongs to the intermediate filament family. In terms of assembly, heterotetramer of two type I and two type II keratins. Interacts with eukaryotic translation initiator factor 3 (eIF3) subunit EIF3S10. Interacts with GPER1. Arg-20 is dimethylated, probably to asymmetric dimethylarginine.

In terms of biological role, blocks interferon-dependent interphase and stimulates DNA synthesis in cells. The chain is Keratin, type II cytoskeletal 7 from Pan troglodytes (Chimpanzee).